The primary structure comprises 229 residues: 2-C-methyl-D-erythritol 4-phosphate cytidylyltransferase (229 aa).

Belongs to the IspD/TarI cytidylyltransferase family. IspD subfamily.

The enzyme catalyses 2-C-methyl-D-erythritol 4-phosphate + CTP + H(+) = 4-CDP-2-C-methyl-D-erythritol + diphosphate. It functions in the pathway isoprenoid biosynthesis; isopentenyl diphosphate biosynthesis via DXP pathway; isopentenyl diphosphate from 1-deoxy-D-xylulose 5-phosphate: step 2/6. In terms of biological role, catalyzes the formation of 4-diphosphocytidyl-2-C-methyl-D-erythritol from CTP and 2-C-methyl-D-erythritol 4-phosphate (MEP). This chain is 2-C-methyl-D-erythritol 4-phosphate cytidylyltransferase, found in Clostridium botulinum (strain ATCC 19397 / Type A).